We begin with the raw amino-acid sequence, 390 residues long: GTPase Obg (390 aa).

The 159-residue stretch at 1–159 folds into the Obg domain; the sequence is MKFVDEATIK…RELRLELLLL (159 aa). One can recognise an OBG-type G domain in the interval 160–333; sequence ADVGMLGLPN…LCDELADFMD (174 aa). GTP contacts are provided by residues 166–173, 191–195, 213–216, 283–286, and 314–316; these read GLPNAGKS, FTTLI, DIPG, NKTD, and AAV. Mg(2+) is bound by residues Ser-173 and Thr-193.

This sequence belongs to the TRAFAC class OBG-HflX-like GTPase superfamily. OBG GTPase family. As to quaternary structure, monomer. Mg(2+) serves as cofactor.

It localises to the cytoplasm. An essential GTPase which binds GTP, GDP and possibly (p)ppGpp with moderate affinity, with high nucleotide exchange rates and a fairly low GTP hydrolysis rate. Plays a role in control of the cell cycle, stress response, ribosome biogenesis and in those bacteria that undergo differentiation, in morphogenesis control. The polypeptide is GTPase Obg (Aliivibrio fischeri (strain ATCC 700601 / ES114) (Vibrio fischeri)).